An 88-amino-acid polypeptide reads, in one-letter code: Cell division topological specificity factor (88 aa).

This sequence belongs to the MinE family.

Functionally, prevents the cell division inhibition by proteins MinC and MinD at internal division sites while permitting inhibition at polar sites. This ensures cell division at the proper site by restricting the formation of a division septum at the midpoint of the long axis of the cell. This chain is Cell division topological specificity factor, found in Herminiimonas arsenicoxydans.